The primary structure comprises 232 residues: Orotate phosphoribosyltransferase (232 aa).

Residues Arg107, Lys108, Lys111, and 133–141 (EDLTTDGGS) each bind 5-phospho-alpha-D-ribose 1-diphosphate. Thr137 serves as a coordination point for orotate.

It belongs to the purine/pyrimidine phosphoribosyltransferase family. PyrE subfamily. As to quaternary structure, homodimer. Mg(2+) is required as a cofactor.

The enzyme catalyses orotidine 5'-phosphate + diphosphate = orotate + 5-phospho-alpha-D-ribose 1-diphosphate. It functions in the pathway pyrimidine metabolism; UMP biosynthesis via de novo pathway; UMP from orotate: step 1/2. Its function is as follows. Catalyzes the transfer of a ribosyl phosphate group from 5-phosphoribose 1-diphosphate to orotate, leading to the formation of orotidine monophosphate (OMP). The sequence is that of Orotate phosphoribosyltransferase from Cereibacter sphaeroides (strain KD131 / KCTC 12085) (Rhodobacter sphaeroides).